Reading from the N-terminus, the 879-residue chain is DNA double-strand break repair Rad50 ATPase (879 aa).

ATP is bound by residues 32 to 38 (NGAGKSS) and Q139. Coiled coils occupy residues 184-304 (IELQ…NKIK) and 342-436 (EIKG…NQVK). The Zinc-hook domain occupies 394–492 (LQKLNEDLNN…LISELNQIIN (99 aa)). Residues C440 and C443 each contribute to the Zn(2+) site. Residues 502–722 (IRNLADYNNL…LITAYDKLKK (221 aa)) are a coiled coil. Residue 786–791 (LLSGGE) coordinates ATP.

It belongs to the SMC family. RAD50 subfamily. Homodimer. Forms a heterotetramer composed of two Mre11 subunits and two Rad50 subunits. Requires Zn(2+) as cofactor.

Functionally, part of the Rad50/Mre11 complex, which is involved in the early steps of DNA double-strand break (DSB) repair. The complex may facilitate opening of the processed DNA ends to aid in the recruitment of HerA and NurA. Rad50 controls the balance between DNA end bridging and DNA resection via ATP-dependent structural rearrangements of the Rad50/Mre11 complex. This chain is DNA double-strand break repair Rad50 ATPase, found in Sulfurisphaera tokodaii (strain DSM 16993 / JCM 10545 / NBRC 100140 / 7) (Sulfolobus tokodaii).